The following is a 196-amino-acid chain: MVLKNAIALTGGIGTGKSTTIKILESQGYKILDADKIAHQLLQEHRFKIAQHFGSDILEKDILNRKKLGAIVFQDAHELKWLEDFLHPLIREHMLKKAYELEKNHQAYFLDIPLFFEVGGKKCYPVSKVVLVYASRALQIERLLERDKLKEAEILQRLACQMDIEQKRAMSDYIIDNSSSLKDLNKQVERFLKTLL.

The region spanning 6 to 196 (AIALTGGIGT…QVERFLKTLL (191 aa)) is the DPCK domain. Residue 14–19 (GTGKST) participates in ATP binding.

This sequence belongs to the CoaE family.

Its subcellular location is the cytoplasm. The enzyme catalyses 3'-dephospho-CoA + ATP = ADP + CoA + H(+). It functions in the pathway cofactor biosynthesis; coenzyme A biosynthesis; CoA from (R)-pantothenate: step 5/5. Catalyzes the phosphorylation of the 3'-hydroxyl group of dephosphocoenzyme A to form coenzyme A. The polypeptide is Dephospho-CoA kinase (Helicobacter pylori (strain ATCC 700392 / 26695) (Campylobacter pylori)).